The primary structure comprises 251 residues: Chlorophyll a-b binding protein 4, chloroplastic (251 aa).

S35 carries the phosphoserine modification. W57 contacts chlorophyll b. Positions 77 and 96 each coordinate chlorophyll a. A chlorophyll b-binding site is contributed by R101. A run of 2 helical transmembrane segments spans residues 102–122 (WAML…IGII) and 135–155 (YFAS…YVEI). Chlorophyll b contacts are provided by S138, V144, E154, and R157. Chlorophyll a-binding residues include K204, E205, N208, R210, Q222, and H237.

This sequence belongs to the light-harvesting chlorophyll a/b-binding (LHC) protein family. As to quaternary structure, the LHC complex consists of chlorophyll a-b binding proteins. Red-emitting heterodimer with LHCA1. It depends on Binds at least 14 chlorophylls (8 Chl-a and 6 Chl-b) and carotenoids such as lutein and neoxanthin. as a cofactor. Post-translationally, photoregulated by reversible phosphorylation of its threonine residues.

It is found in the plastid. It localises to the chloroplast thylakoid membrane. Its function is as follows. The light-harvesting complex (LHC) functions as a light receptor, it captures and delivers excitation energy to photosystems with which it is closely associated. The chain is Chlorophyll a-b binding protein 4, chloroplastic from Arabidopsis thaliana (Mouse-ear cress).